Here is a 473-residue protein sequence, read N- to C-terminus: Uronate isomerase (473 aa).

The protein belongs to the metallo-dependent hydrolases superfamily. Uronate isomerase family.

It carries out the reaction D-glucuronate = D-fructuronate. It catalyses the reaction aldehydo-D-galacturonate = keto-D-tagaturonate. The protein operates within carbohydrate metabolism; pentose and glucuronate interconversion. This Bacillus subtilis (strain 168) protein is Uronate isomerase (uxaC).